Here is a 202-residue protein sequence, read N- to C-terminus: Na(+)-translocating NADH-quinone reductase subunit E (202 aa).

Helical transmembrane passes span Leu4–Gly24, Ile35–Ile55, Phe81–Phe101, Gly114–Val134, Leu144–Val164, and Leu180–Ile200.

The protein belongs to the NqrDE/RnfAE family. As to quaternary structure, composed of six subunits; NqrA, NqrB, NqrC, NqrD, NqrE and NqrF.

It localises to the cell inner membrane. It catalyses the reaction a ubiquinone + n Na(+)(in) + NADH + H(+) = a ubiquinol + n Na(+)(out) + NAD(+). In terms of biological role, NQR complex catalyzes the reduction of ubiquinone-1 to ubiquinol by two successive reactions, coupled with the transport of Na(+) ions from the cytoplasm to the periplasm. NqrA to NqrE are probably involved in the second step, the conversion of ubisemiquinone to ubiquinol. The sequence is that of Na(+)-translocating NADH-quinone reductase subunit E from Nitrosomonas europaea (strain ATCC 19718 / CIP 103999 / KCTC 2705 / NBRC 14298).